The sequence spans 323 residues: Acetyl esterase (323 aa).

The short motif at 91 to 93 (HGG) is the Involved in the stabilization of the negatively charged intermediate by the formation of the oxyanion hole element. Catalysis depends on residues S165, D262, and H292.

It belongs to the 'GDXG' lipolytic enzyme family. As to quaternary structure, homodimer. Interacts with MalT and MelA.

Its subcellular location is the cytoplasm. Its function is as follows. Displays esterase activity towards short chain fatty esters (acyl chain length of up to 8 carbons). Able to hydrolyze triacetylglycerol (triacetin) and tributyrylglycerol (tributyrin), but not trioleylglycerol (triolein) or cholesterol oleate. Negatively regulates MalT activity by antagonizing maltotriose binding. Inhibits MelA galactosidase activity. The sequence is that of Acetyl esterase from Salmonella typhi.